The sequence spans 267 residues: Tryptophan synthase alpha chain (267 aa).

Catalysis depends on proton acceptor residues Glu-49 and Asp-60.

The protein belongs to the TrpA family. Tetramer of two alpha and two beta chains.

The enzyme catalyses (1S,2R)-1-C-(indol-3-yl)glycerol 3-phosphate + L-serine = D-glyceraldehyde 3-phosphate + L-tryptophan + H2O. It functions in the pathway amino-acid biosynthesis; L-tryptophan biosynthesis; L-tryptophan from chorismate: step 5/5. In terms of biological role, the alpha subunit is responsible for the aldol cleavage of indoleglycerol phosphate to indole and glyceraldehyde 3-phosphate. The chain is Tryptophan synthase alpha chain from Carboxydothermus hydrogenoformans (strain ATCC BAA-161 / DSM 6008 / Z-2901).